Here is a 94-residue protein sequence, read N- to C-terminus: Pyrimidine/purine nucleoside phosphorylase (94 aa).

The protein belongs to the nucleoside phosphorylase PpnP family.

The enzyme catalyses a purine D-ribonucleoside + phosphate = a purine nucleobase + alpha-D-ribose 1-phosphate. It catalyses the reaction adenosine + phosphate = alpha-D-ribose 1-phosphate + adenine. It carries out the reaction cytidine + phosphate = cytosine + alpha-D-ribose 1-phosphate. The catalysed reaction is guanosine + phosphate = alpha-D-ribose 1-phosphate + guanine. The enzyme catalyses inosine + phosphate = alpha-D-ribose 1-phosphate + hypoxanthine. It catalyses the reaction thymidine + phosphate = 2-deoxy-alpha-D-ribose 1-phosphate + thymine. It carries out the reaction uridine + phosphate = alpha-D-ribose 1-phosphate + uracil. The catalysed reaction is xanthosine + phosphate = alpha-D-ribose 1-phosphate + xanthine. Its function is as follows. Catalyzes the phosphorolysis of diverse nucleosides, yielding D-ribose 1-phosphate and the respective free bases. Can use uridine, adenosine, guanosine, cytidine, thymidine, inosine and xanthosine as substrates. Also catalyzes the reverse reactions. The chain is Pyrimidine/purine nucleoside phosphorylase from Salmonella agona (strain SL483).